Consider the following 107-residue polypeptide: Subtilisin inhibitor-like protein 3 (107 aa).

Intrachain disulfides connect Cys-29–Cys-44 and Cys-65–Cys-95.

It belongs to the protease inhibitor I16 (SSI) family. In terms of assembly, homodimer.

The protein resides in the secreted. In terms of biological role, inhibitor of subtilisin BPN' and trypsin. In Streptomyces coelicolor, this protein is Subtilisin inhibitor-like protein 3.